The sequence spans 336 residues: Di/tripeptide transport system permease protein DppB (336 aa).

Helical transmembrane passes span 10 to 30 (GLLIPTFFGVTLLTFALIRLI), 102 to 122 (LSLAAMLFAGTFGLLAGVIAA), 145 to 165 (IFWWGLILIMLFSVSLGWTPV), 198 to 218 (AVRHLILPAIVLGTIPLAVIA), 257 to 277 (LIPVLTVFGLQVGTLLAGAVL), and 307 to 327 (ILLVATLVILVNFVVDILYGL). The ABC transmembrane type-1 domain maps to 96–325 (FPATLELSLA…LVNFVVDILY (230 aa)).

This sequence belongs to the binding-protein-dependent transport system permease family. OppBC subfamily. As to quaternary structure, the complex is composed of two ATP-binding proteins (DppD and DppF), two transmembrane proteins (DppB and DppC) and a solute-binding protein (DppA1-A5). Five orthologous SBPs (DppA1-A5) are present in P.aeruginosa, which increases the substrate specificity of the DppBCDF transporter.

The protein localises to the cell inner membrane. In terms of biological role, part of the ABC transporter DppABCDF involved in the uptake of various di/tripeptides. Is also involved in the uptake of phaseolotoxin, a toxic tripeptide inhibiting the enzyme ornithine carbamoyltransferase. Responsible for the translocation of the substrate across the membrane. This is Di/tripeptide transport system permease protein DppB from Pseudomonas aeruginosa (strain UCBPP-PA14).